Consider the following 944-residue polypeptide: Serine/threonine-protein kinase PLK4 (944 aa).

In terms of domain architecture, Protein kinase spans 12–265; the sequence is FKVLNLLGKG…LSSVLDHAFM (254 aa). ATP contacts are provided by residues 18–26 and Lys-41; that span reads LGKGSFACV. The active-site Proton acceptor is Asp-136. Disordered regions lie at residues 327–396, 432–463, and 530–561; these read KDKH…YSER, RSLE…RSND, and LGIK…QQAF. The segment covering 378-394 has biased composition (polar residues); it reads RSGTSQSQTYAKPSSYS. A compositionally biased stretch (basic and acidic residues) spans 432–447; the sequence is RSLERHTSPPVKEKTP. Residues 548-561 are compositionally biased toward polar residues; the sequence is FGEQSKSRVPQQAF. A Cryptic POLO box 1 (CPB1) domain is found at 565 to 678; that stretch reads TLRSIISPLN…AKFIKLVRSK (114 aa). A Cryptic POLO box 2 (CPB2) domain is found at 679–791; that stretch reads TPKVTYYTRY…GRRPALAESP (113 aa). Positions 786 to 809 are disordered; the sequence is ALAESPKTQPTPSVDSARERKEEQ. The region spanning 862–940 is the POLO box domain; that stretch reads QVLKSVFVEN…LSSILMLFAS (79 aa).

The protein belongs to the protein kinase superfamily. Ser/Thr protein kinase family. CDC5/Polo subfamily. Homodimer. Post-translationally, ubiquitinated; leading to its degradation by the proteasome.

The protein localises to the cytoplasm. The protein resides in the cytoskeleton. It localises to the microtubule organizing center. It is found in the centrosome. Its subcellular location is the centriole. The enzyme catalyses L-seryl-[protein] + ATP = O-phospho-L-seryl-[protein] + ADP + H(+). The catalysed reaction is L-threonyl-[protein] + ATP = O-phospho-L-threonyl-[protein] + ADP + H(+). Functionally, serine/threonine-protein kinase that plays a central role in centriole duplication. Able to trigger procentriole formation on the surface of the parental centriole cylinder, leading to the recruitment of centriole biogenesis proteins such as sass6, cpap, ccp110, cep135 and gamma-tubulin. When overexpressed, it is able to induce centrosome amplification through the simultaneous generation of multiple procentrioles adjoining each parental centriole during S phase. Its central role in centriole replication suggests a possible role in tumorigenesis, centrosome aberrations being frequently observed in tumors. Also involved in deuterosome-mediated centriole amplification in multiciliated that can generate more than 100 centrioles. The polypeptide is Serine/threonine-protein kinase PLK4 (Xenopus laevis (African clawed frog)).